Consider the following 404-residue polypeptide: Multidrug resistance protein MdtH (404 aa).

The Cytoplasmic portion of the chain corresponds to 1 to 12 (MSRVSQARNLGK). A helical transmembrane segment spans residues 13 to 33 (YFLLIDNMLVVLGFFVVFPLI). Residues 34 to 98 (SIRFVDQMGW…GFATMGIAHE (65 aa)) lie on the Periplasmic side of the membrane. A helical membrane pass occupies residues 99–116 (PWLLWFSCFLSGLGGTLF). The Cytoplasmic segment spans residues 117 to 138 (DPPRSALVVKLIRPEQRGRFFS). A helical transmembrane segment spans residues 139–159 (LLMMQDSAGAVIGALLGSWLL). Residues 160–164 (QYDFR) lie on the Periplasmic side of the membrane. A helical transmembrane segment spans residues 165–185 (LVCAMGAILFIVCAIFNAWLL). Residues 186-213 (PAWKLSTVRTPVREGMRRVISDKRFVTY) lie on the Cytoplasmic side of the membrane. Residues 214-234 (VLTLAGYYMLAVQVMLMLPIM) traverse the membrane as a helical segment. Over 235–243 (VNDVAGSPA) the chain is Periplasmic. Residues 244-264 (AVKWMYAIEACLSLTLLYPIA) form a helical membrane-spanning segment. Residues 265-276 (RWSEKRFRLEHR) lie on the Cytoplasmic side of the membrane. Residues 277-297 (LMAGLLIMSLSMIPIGLAGNL) traverse the membrane as a helical segment. Over 298–299 (QQ) the chain is Periplasmic. The chain crosses the membrane as a helical span at residues 300 to 320 (LFTLICAFYIGSVIAEPARET). The Cytoplasmic portion of the chain corresponds to 321–339 (LSASLTDARARGSYMGFSR). A helical transmembrane segment spans residues 340 to 360 (LGLAIGGAIGYIGGGWLFDMG). Over 361 to 367 (KTLAQPE) the chain is Periplasmic. Residues 368–388 (LPWMMLGIIGFITFLALGWQF) traverse the membrane as a helical segment. Topologically, residues 389-404 (SHKRTPRQYTGARRLI) are cytoplasmic.

It belongs to the major facilitator superfamily. DHA1 family. MdtH (TC 2.A.1.2.21) subfamily.

Its subcellular location is the cell inner membrane. This is Multidrug resistance protein MdtH from Salmonella arizonae (strain ATCC BAA-731 / CDC346-86 / RSK2980).